Reading from the N-terminus, the 78-residue chain is MSAHCQVTGRKPGFGNTVSHSHRRSRRRWSPNIQQRTYYLPSEGRRIRLRVSTKGIKVIDRDGIEAVVARLRRQGQRI.

The disordered stretch occupies residues 1 to 29 (MSAHCQVTGRKPGFGNTVSHSHRRSRRRW). The segment covering 20–29 (HSHRRSRRRW) has biased composition (basic residues).

It belongs to the bacterial ribosomal protein bL28 family.

The chain is Large ribosomal subunit protein bL28B (rpmB2) from Mycobacterium bovis (strain ATCC BAA-935 / AF2122/97).